Here is a 707-residue protein sequence, read N- to C-terminus: Keratin, type II cytoskeletal 2 epidermal (707 aa).

The segment at 1–20 (MSCQISCRSRRGGGGGGGGG) is disordered. The tract at residues 1-198 (MSCQISCRSR…DPEIQNVKSQ (198 aa)) is head. Arg-22 is modified (asymmetric dimethylarginine). Phosphoserine is present on residues Ser-25 and Ser-28. Over residues 29–38 (AVVSGGSRRS) the composition is skewed to low complexity. A disordered region spans residues 29-59 (AVVSGGSRRSNTSFSCISRHGGGRGGSGGGG). Arg-52 is subject to Omega-N-methylarginine. Ser-64 carries the phosphoserine modification. The segment at 199–234 (EREQIKTLNNKFASFIDKVRFLEQQNQVLRTKWELL) is coil 1A. In terms of domain architecture, IF rod spans 199–512 (EREQIKTLNN…KLLEGEECRM (314 aa)). The linker 1 stretch occupies residues 235-253 (QQLDVGSRTTNLDPIFQAY). Residues 254–345 (IGMLKKQVDR…TLYDAELSQL (92 aa)) are coil 1B. Residues 346-369 (QQDVTDTNVILSMDNNRNLDLDSI) are linker 12. Residues 370–508 (IAEVQNQYEM…ATYRKLLEGE (139 aa)) are coil 2. Positions 509–707 (ECRMSGDFSD…CGSGVTFSFR (199 aa)) are tail. A disordered region spans residues 531–707 (SSVASKTGFG…CGSGVTFSFR (177 aa)). Residues 539-700 (FGSGGQSSGG…GSGSGEGCGS (162 aa)) are compositionally biased toward gly residues. Omega-N-methylarginine occurs at positions 555, 593, 607, and 675.

This sequence belongs to the intermediate filament family. Heterotetramer of two type I and two type II keratins. Associates with KRT10. Expressed predominantly in the suprabasal layers of the plantar epidermis outside of the footpads (at protein level). Expressed in the suprabasal layers of the interfollicular epidermis of the ear, in the interscale regions distant from the hair follicles in the tail, and in the soles of the footpads (at protein level). Expressed mainly in the middle spinous and granular cells of the epidermis of adult tail, nipple and footsole skin. Also found in ear.

It localises to the cytoplasm. In terms of biological role, probably contributes to terminal cornification. Associated with keratinocyte activation, proliferation and keratinization. Required for maintenance of corneocytes and keratin filaments in suprabasal keratinocytes in the epidermis of the ear, potentially via moderation of expression and localization of keratins and their partner proteins. Plays a role in the establishment of the epidermal barrier on plantar skin. This is Keratin, type II cytoskeletal 2 epidermal from Mus musculus (Mouse).